A 140-amino-acid polypeptide reads, in one-letter code: Sex-regulated protein janus-B (140 aa).

Residue R42 coordinates substrate. H69 serves as the catalytic Proton acceptor. Substrate is bound at residue C110–T112.

This sequence belongs to the janus family.

Functionally, janA and janB regulate somatic sex differentiation. The sequence is that of Sex-regulated protein janus-B (janB) from Drosophila pseudoobscura pseudoobscura (Fruit fly).